The following is a 62-amino-acid chain: LTCVTDKSFGGVNTEECAAGQKICFKNWKKMGPKLYDVKRGCTATCPKADDDGCVKCCNTDK.

3 cysteine pairs are disulfide-bonded: Cys-3-Cys-24, Cys-17-Cys-42, and Cys-46-Cys-57.

The protein belongs to the three-finger toxin family. Short-chain subfamily. Aminergic toxin sub-subfamily. Homodimer; disulfide-linked. As to expression, expressed by the venom gland.

Its subcellular location is the secreted. In terms of biological role, this protein shows a synergetic toxic effect in that it enhances the toxicity of other toxins. The chain is Synergistic-type venom protein S2C4 from Dendroaspis jamesoni kaimosae (Eastern Jameson's mamba).